Reading from the N-terminus, the 773-residue chain is ATP-dependent RNA helicase MAK5 (773 aa).

Residues 73 to 82 (KDSNKEKVGD) show a composition bias toward basic and acidic residues. 2 disordered regions span residues 73-99 (KDSN…ESEL) and 114-144 (SAAS…VDED). The span at 83–99 (DQESVENESGSDSESEL) shows a compositional bias: acidic residues. Thr135 carries the post-translational modification Phosphothreonine. Ser138 carries the phosphoserine modification. The Q motif motif lies at 171–199 (EWTNLAPLSMTILQSLQNLNFLRPTEIQK). Residues 202–399 (IPVIMQGVDV…SSSRQVKDRR (198 aa)) enclose the Helicase ATP-binding domain. Residue 215–222 (ASTGSGKT) coordinates ATP. The DEAD box signature appears at 333-336 (DEAD). The 164-residue stretch at 452–615 (DLYCYYFLTM…STDLNSRSTN (164 aa)) folds into the Helicase C-terminal domain. At Ser678 the chain carries Phosphoserine.

This sequence belongs to the DEAD box helicase family. DDX24/MAK5 subfamily.

It is found in the nucleus. It localises to the nucleolus. The enzyme catalyses ATP + H2O = ADP + phosphate + H(+). ATP-binding RNA helicase involved in the biogenesis of 60S ribosomal subunits and is required for the normal formation of 25S and 5.8S rRNAs. Required for the maintenance of dsRNA killer plasmid. The chain is ATP-dependent RNA helicase MAK5 (MAK5) from Saccharomyces cerevisiae (strain ATCC 204508 / S288c) (Baker's yeast).